The primary structure comprises 40 residues: Photosystem II reaction center protein J (40 aa).

The helical transmembrane segment at 8 to 28 (IPLWVIGTVAGIPVIGLIGIF) threads the bilayer.

This sequence belongs to the PsbJ family. In terms of assembly, PSII is composed of 1 copy each of membrane proteins PsbA, PsbB, PsbC, PsbD, PsbE, PsbF, PsbH, PsbI, PsbJ, PsbK, PsbL, PsbM, PsbT, PsbX, PsbY, PsbZ, Psb30/Ycf12, at least 3 peripheral proteins of the oxygen-evolving complex and a large number of cofactors. It forms dimeric complexes.

The protein resides in the plastid. Its subcellular location is the chloroplast thylakoid membrane. Its function is as follows. One of the components of the core complex of photosystem II (PSII). PSII is a light-driven water:plastoquinone oxidoreductase that uses light energy to abstract electrons from H(2)O, generating O(2) and a proton gradient subsequently used for ATP formation. It consists of a core antenna complex that captures photons, and an electron transfer chain that converts photonic excitation into a charge separation. This chain is Photosystem II reaction center protein J, found in Nasturtium officinale (Watercress).